A 524-amino-acid chain; its full sequence is ORC1-type DNA replication protein 4 (524 aa).

Positions 1-23 are enriched in polar residues; that stretch reads MTDKSNNPAPASDPSTTETSNDA. Residues 1-67 form a disordered region; that stretch reads MTDKSNNPAP…DDPSDEASRG (67 aa). Residues 128–132, Tyr-325, and Arg-337 each bind ATP; that span reads TGKTA.

It belongs to the CDC6/cdc18 family.

In terms of biological role, involved in regulation of DNA replication. This Haloarcula marismortui (strain ATCC 43049 / DSM 3752 / JCM 8966 / VKM B-1809) (Halobacterium marismortui) protein is ORC1-type DNA replication protein 4 (cdc6d).